Reading from the N-terminus, the 260-residue chain is MSKSVFVGELTWKEYEARVAAGDCVLMLPVGALEQHGHHMCMNVDVLLPTAVCKRVAERIGALVMPGLQYGYKSQQKSGGGNHFPGTTSLDGATLTGTVQDIIRELARHGARRLVLMNGHYENSMFIVEGIDLALRELRYAGIQDFKVVVLSYWDFVKDPAVIQQLYPEGFLGWDIEHGGVFETSLMLALYPDLVDLDRVVDHPPATFPPYDVFPVDPARTPAPGTLSSAKTASREKGELILEVCVQGIADAIREEFPPT.

A Mn(2+)-binding site is contributed by E34. Zn(2+)-binding residues include E34, H36, and D45. A Mn(2+)-binding site is contributed by D45. Residue S78 participates in creatine binding. Residue H120 participates in Mn(2+) binding. Position 120 (H120) interacts with Zn(2+). The creatine site is built by Y121, W174, D175, and H178. Residue E183 participates in Zn(2+) binding.

The protein belongs to the creatininase superfamily. As to quaternary structure, homohexamer; trimer of dimers. The cofactor is Zn(2+). Mn(2+) serves as cofactor.

It catalyses the reaction creatinine + H2O = creatine. It functions in the pathway amine and polyamine degradation; creatinine degradation. With respect to regulation, is markedly inactivated in vitro by heavy metal ions, N-bromosuccinimide, ethoxyformic anhydride, and dye-sensitized photooxidation. In terms of biological role, cyclic amidohydrolase that catalyzes the reversible conversion of creatinine to creatine. Is also active toward glycocyamidine, though the reaction rate is very low, but it is completely inert toward hydantoin and its derivatives. In Pseudomonas putida (Arthrobacter siderocapsulatus), this protein is Creatinine amidohydrolase (crnA).